The primary structure comprises 424 residues: Insertion element IS2A uncharacterized 48.2 kDa protein (424 aa).

In terms of domain architecture, Integrase catalytic spans 229 to 412 (KPAVPPSKRA…SPREYLRHGA (184 aa)).

The protein belongs to the transposase 8 family.

The sequence is that of Insertion element IS2A uncharacterized 48.2 kDa protein from Escherichia coli.